Reading from the N-terminus, the 182-residue chain is Adenine phosphoribosyltransferase (182 aa).

The protein belongs to the purine/pyrimidine phosphoribosyltransferase family. As to quaternary structure, homodimer.

The protein localises to the cytoplasm. It catalyses the reaction AMP + diphosphate = 5-phospho-alpha-D-ribose 1-diphosphate + adenine. It functions in the pathway purine metabolism; AMP biosynthesis via salvage pathway; AMP from adenine: step 1/1. Its function is as follows. Catalyzes a salvage reaction resulting in the formation of AMP, that is energically less costly than de novo synthesis. This is Adenine phosphoribosyltransferase from Pseudomonas fluorescens (strain SBW25).